Reading from the N-terminus, the 130-residue chain is uncharacterized protein (130 aa).

A disordered region spans residues Met-1 to Val-28. Polar residues predominate over residues Gln-17–Val-28.

This is an uncharacterized protein from Saccharomyces cerevisiae (strain ATCC 204508 / S288c) (Baker's yeast).